Here is a 700-residue protein sequence, read N- to C-terminus: Elongation factor G 1 (700 aa).

Residues Glu8–Ala290 form the tr-type G domain. Residues Ala17–Thr24, Asp88–His92, and Asn142–Asp145 contribute to the GTP site.

It belongs to the TRAFAC class translation factor GTPase superfamily. Classic translation factor GTPase family. EF-G/EF-2 subfamily.

The protein localises to the cytoplasm. In terms of biological role, catalyzes the GTP-dependent ribosomal translocation step during translation elongation. During this step, the ribosome changes from the pre-translocational (PRE) to the post-translocational (POST) state as the newly formed A-site-bound peptidyl-tRNA and P-site-bound deacylated tRNA move to the P and E sites, respectively. Catalyzes the coordinated movement of the two tRNA molecules, the mRNA and conformational changes in the ribosome. The chain is Elongation factor G 1 from Bordetella parapertussis (strain 12822 / ATCC BAA-587 / NCTC 13253).